We begin with the raw amino-acid sequence, 172 residues long: C-phycocyanin beta chain (172 aa).

N72 bears the N4-methylasparagine mark. (2R,3E)-phycocyanobilin contacts are provided by C82 and C153.

It belongs to the phycobiliprotein family. As to quaternary structure, heterodimer of an alpha and a beta subunit, which further assembles into trimers and the trimers into hexamers. The basic functional unit of phycobiliproteins is a ring-shaped hexamer formed from two back-to-back trimers contacting via the alpha chain subunits. The trimers are composed of alpha/beta subunit heterodimers arranged around a three-fold axis of symmetry. The phycoerythrins also contain a gamma subunit which is located in the center of the hexamer. Post-translationally, contains two covalently linked bilin chromophores.

Its subcellular location is the plastid. It is found in the chloroplast thylakoid membrane. Its function is as follows. Light-harvesting photosynthetic bile pigment-protein from the phycobiliprotein complex (phycobilisome, PBS). Phycocyanin is the major phycobiliprotein in the PBS rod. The chain is C-phycocyanin beta chain (cpcB) from Pyropia haitanensis (Red seaweed).